Reading from the N-terminus, the 89-residue chain is Small ribosomal subunit protein uS15 (89 aa).

The protein belongs to the universal ribosomal protein uS15 family. As to quaternary structure, part of the 30S ribosomal subunit. Forms a bridge to the 50S subunit in the 70S ribosome, contacting the 23S rRNA.

In terms of biological role, one of the primary rRNA binding proteins, it binds directly to 16S rRNA where it helps nucleate assembly of the platform of the 30S subunit by binding and bridging several RNA helices of the 16S rRNA. Forms an intersubunit bridge (bridge B4) with the 23S rRNA of the 50S subunit in the ribosome. The protein is Small ribosomal subunit protein uS15 of Brevibacillus brevis (strain 47 / JCM 6285 / NBRC 100599).